Consider the following 229-residue polypeptide: Flagellar L-ring protein (229 aa).

An N-terminal signal peptide occupies residues 1–25 (MKQVRLLPSAAVRAACALAAAALAG). A lipid anchor (N-palmitoyl cysteine) is attached at cysteine 26. A lipid anchor (S-diacylglycerol cysteine) is attached at cysteine 26.

It belongs to the FlgH family. The basal body constitutes a major portion of the flagellar organelle and consists of four rings (L,P,S, and M) mounted on a central rod.

It localises to the cell outer membrane. Its subcellular location is the bacterial flagellum basal body. In terms of biological role, assembles around the rod to form the L-ring and probably protects the motor/basal body from shearing forces during rotation. This Burkholderia multivorans (strain ATCC 17616 / 249) protein is Flagellar L-ring protein.